We begin with the raw amino-acid sequence, 247 residues long: uncharacterized protein (247 aa).

2 helical membrane-spanning segments follow: residues 11 to 31 (LIAPPLNTFVLLIIAAIIYCV) and 39 to 59 (FIAIISFTWLYIMSAPFTGLL).

It localises to the cell membrane. This is an uncharacterized protein from Haemophilus influenzae (strain ATCC 51907 / DSM 11121 / KW20 / Rd).